We begin with the raw amino-acid sequence, 147 residues long: uncharacterized protein (147 aa).

This sequence to M.jannaschii MJ1086 N-terminal region.

This is an uncharacterized protein from Methanocaldococcus jannaschii (strain ATCC 43067 / DSM 2661 / JAL-1 / JCM 10045 / NBRC 100440) (Methanococcus jannaschii).